We begin with the raw amino-acid sequence, 357 residues long: Cyclic AMP-responsive element-binding protein 5 (357 aa).

Residues 114 to 239 are disordered; that stretch reads RQDQTPHHHL…FLERNRAAAT (126 aa). Basic residues-rich tracts occupy residues 120–129 and 138–175; these read HHHLHSHPHQ and PYPHQHQHPAHHPHPQPHHQQNHPHHHSHSHLHAHPAH. The segment covering 186–195 has biased composition (polar residues); that stretch reads TGNQAQVSPA. Residues 196-206 show a composition bias toward low complexity; it reads TQQMQPTQTIQ. Basic and acidic residues predominate over residues 218–235; it reads VVDEDPDERRRKFLERNR. The region spanning 224 to 287 is the bZIP domain; sequence DERRRKFLER…AQLKQLLLTH (64 aa). Residues 226-246 are basic motif; it reads RRRKFLERNRAAATRCRQKRK. The segment at 252–280 is leucine-zipper; that stretch reads LEKKAEELTQTNMQLQNEVSMLKNEVAQL. Residues 298–318 form a disordered region; that stretch reads ESQGYLSPESSPPASPVPACS.

The protein belongs to the bZIP family. In terms of assembly, binds DNA as a homodimer or as a heterodimer with JUN or ATF2/CREBP1.

It is found in the nucleus. Its function is as follows. Binds to the cAMP response element and activates transcription. The protein is Cyclic AMP-responsive element-binding protein 5 (Creb5) of Mus musculus (Mouse).